Consider the following 116-residue polypeptide: Flagellar transcriptional regulator FlhD (116 aa).

Belongs to the FlhD family. In terms of assembly, homodimer; disulfide-linked. Forms a heterohexamer composed of two FlhC and four FlhD subunits. Each FlhC binds a FlhD dimer, forming a heterotrimer, and a hexamer assembles by dimerization of two heterotrimers.

The protein resides in the cytoplasm. In terms of biological role, functions in complex with FlhC as a master transcriptional regulator that regulates transcription of several flagellar and non-flagellar operons by binding to their promoter region. Activates expression of class 2 flagellar genes, including fliA, which is a flagellum-specific sigma factor that turns on the class 3 genes. Also regulates genes whose products function in a variety of physiological pathways. This chain is Flagellar transcriptional regulator FlhD, found in Pectobacterium carotovorum subsp. carotovorum (strain PC1).